Here is a 278-residue protein sequence, read N- to C-terminus: 4-deoxy-L-threo-5-hexosulose-uronate ketol-isomerase (278 aa).

Zn(2+)-binding residues include His196, His198, Glu203, and His245.

It belongs to the KduI family. In terms of assembly, homohexamer. Zn(2+) is required as a cofactor.

It catalyses the reaction 5-dehydro-4-deoxy-D-glucuronate = 3-deoxy-D-glycero-2,5-hexodiulosonate. Its pathway is glycan metabolism; pectin degradation; 2-dehydro-3-deoxy-D-gluconate from pectin: step 4/5. Catalyzes the isomerization of 5-dehydro-4-deoxy-D-glucuronate to 3-deoxy-D-glycero-2,5-hexodiulosonate. The polypeptide is 4-deoxy-L-threo-5-hexosulose-uronate ketol-isomerase (Escherichia coli O8 (strain IAI1)).